The chain runs to 259 residues: Polycomb group RING finger protein 1 (259 aa).

An RING-type zinc finger spans residues 45-84; sequence CYLCAGYFIDATTITECLHTFCKSCIVKYLQTSKYCPLCN.

Component of a PRC1-like complex.

It is found in the nucleus. Its function is as follows. Component of a Polycomb group (PcG) multiprotein PRC1-like complex, a complex class required to maintain the transcriptionally repressive state of many genes, including Hox genes, throughout development. PcG PRC1 complex acts via chromatin remodeling and modification of histones; it mediates monoubiquitination of histone H2A 'Lys-119', rendering chromatin heritably changed in its expressibility. The sequence is that of Polycomb group RING finger protein 1 (pcgf1) from Xenopus tropicalis (Western clawed frog).